The following is a 177-amino-acid chain: Early nodulin-like protein 6 (177 aa).

A signal peptide spans M1–C23. One can recognise a Phytocyanin domain in the interval T24–E127. N-linked (GlcNAc...) asparagine glycosylation is present at N41. C81 and C115 are joined by a disulfide. N149 carries the GPI-anchor amidated asparagine lipid modification. Residues H150 to V177 constitute a propeptide, removed in mature form.

It belongs to the early nodulin-like (ENODL) family. As to expression, confined to flowers.

Its subcellular location is the cell membrane. May act as a carbohydrate transporter. The polypeptide is Early nodulin-like protein 6 (Arabidopsis thaliana (Mouse-ear cress)).